Consider the following 320-residue polypeptide: Pantothenate kinase (320 aa).

An ATP-binding site is contributed by 96-103 (GSVAVGKS).

The protein belongs to the prokaryotic pantothenate kinase family.

The protein localises to the cytoplasm. The enzyme catalyses (R)-pantothenate + ATP = (R)-4'-phosphopantothenate + ADP + H(+). It functions in the pathway cofactor biosynthesis; coenzyme A biosynthesis; CoA from (R)-pantothenate: step 1/5. The sequence is that of Pantothenate kinase from Brevibacillus brevis (strain 47 / JCM 6285 / NBRC 100599).